Reading from the N-terminus, the 588-residue chain is Adenine deaminase (588 aa).

This sequence belongs to the metallo-dependent hydrolases superfamily. Adenine deaminase family. Homodimer. It depends on Mn(2+) as a cofactor.

It carries out the reaction adenine + H2O + H(+) = hypoxanthine + NH4(+). This chain is Adenine deaminase, found in Escherichia coli O17:K52:H18 (strain UMN026 / ExPEC).